The primary structure comprises 207 residues: Thiamine-phosphate synthase (207 aa).

4-amino-2-methyl-5-(diphosphooxymethyl)pyrimidine is bound by residues 36-40 and Asp68; that span reads QLRIK. Positions 69 and 88 each coordinate Mg(2+). Ser106 contacts 4-amino-2-methyl-5-(diphosphooxymethyl)pyrimidine. Residue 132-134 coordinates 2-[(2R,5Z)-2-carboxy-4-methylthiazol-5(2H)-ylidene]ethyl phosphate; the sequence is TQT. Residue Lys135 participates in 4-amino-2-methyl-5-(diphosphooxymethyl)pyrimidine binding. 2-[(2R,5Z)-2-carboxy-4-methylthiazol-5(2H)-ylidene]ethyl phosphate contacts are provided by residues Gly162 and 182 to 183; that span reads VS.

This sequence belongs to the thiamine-phosphate synthase family. It depends on Mg(2+) as a cofactor.

It catalyses the reaction 2-[(2R,5Z)-2-carboxy-4-methylthiazol-5(2H)-ylidene]ethyl phosphate + 4-amino-2-methyl-5-(diphosphooxymethyl)pyrimidine + 2 H(+) = thiamine phosphate + CO2 + diphosphate. It carries out the reaction 2-(2-carboxy-4-methylthiazol-5-yl)ethyl phosphate + 4-amino-2-methyl-5-(diphosphooxymethyl)pyrimidine + 2 H(+) = thiamine phosphate + CO2 + diphosphate. The catalysed reaction is 4-methyl-5-(2-phosphooxyethyl)-thiazole + 4-amino-2-methyl-5-(diphosphooxymethyl)pyrimidine + H(+) = thiamine phosphate + diphosphate. It functions in the pathway cofactor biosynthesis; thiamine diphosphate biosynthesis; thiamine phosphate from 4-amino-2-methyl-5-diphosphomethylpyrimidine and 4-methyl-5-(2-phosphoethyl)-thiazole: step 1/1. Its function is as follows. Condenses 4-methyl-5-(beta-hydroxyethyl)thiazole monophosphate (THZ-P) and 2-methyl-4-amino-5-hydroxymethyl pyrimidine pyrophosphate (HMP-PP) to form thiamine monophosphate (TMP). This chain is Thiamine-phosphate synthase, found in Pyrococcus horikoshii (strain ATCC 700860 / DSM 12428 / JCM 9974 / NBRC 100139 / OT-3).